We begin with the raw amino-acid sequence, 645 residues long: uncharacterized protein (645 aa).

A signal peptide spans 1 to 23; sequence MPSSHRLSATILIFLSLTYISSS. Disordered regions lie at residues 30–58 and 92–129; these read ITDKQDSSEDDDHLQTFPTPPPIGTTTAS and NSNANPYFSTTRKPKNRSDSSQKARDPDPQNQVIAGIP. A compositionally biased stretch (polar residues) spans 92–102; it reads NSNANPYFSTT. The N-linked (GlcNAc...) asparagine glycan is linked to asparagine 107. Residues 107–119 show a composition bias toward basic and acidic residues; that stretch reads NRSDSSQKARDPD. The 80-residue stretch at 135 to 214 folds into the PAN 1 domain; the sequence is CFRRYENSII…QTRDYFEPTD (80 aa). 2 disulfide bridges follow: cysteine 161/cysteine 187 and cysteine 165/cysteine 175. Residues 225 to 247 are disordered; it reads ESSSSAPSSEDEDSPPSPPPSAP. PAN domains are found at residues 281–369 and 378–465; these read CPRG…EKIC and CPST…EVEC. Intrachain disulfides connect cysteine 281/cysteine 369, cysteine 313/cysteine 341, cysteine 317/cysteine 329, cysteine 378/cysteine 465, cysteine 407/cysteine 436, and cysteine 411/cysteine 422. The N-linked (GlcNAc...) asparagine glycan is linked to asparagine 421. Positions 556–567 are enriched in basic and acidic residues; the sequence is AGELENNDHEQI. The disordered stretch occupies residues 556–582; sequence AGELENNDHEQIEDNNTDASEDPVPTK. Asparagine 570 carries an N-linked (GlcNAc...) asparagine glycan.

This is an uncharacterized protein from Caenorhabditis elegans.